Reading from the N-terminus, the 445-residue chain is Interferon-activable protein 202 (445 aa).

The segment covering 1 to 27 (MSNRNLRSSTNSEFSEGQHQTPSSDSS) has biased composition (polar residues). A disordered region spans residues 1-57 (MSNRNLRSSTNSEFSEGQHQTPSSDSSGHGEDQPQASPGPNKKSHTPKKNISKGAVL). Over residues 42–51 (KKSHTPKKNI) the composition is skewed to basic residues. HIN-200 domains follow at residues 46–243 (TPKK…IKGE) and 244–441 (KLLK…MEVI). Required for homomultimerization stretches follow at residues 82–89 (MFHATVAT) and 281–288 (MFHATVAT).

It belongs to the HIN-200 family. Homomultimer; homotetramerizes (via HIN-200 domain 2), enhancing affinity for double-stranded DNA (dsDNA). Interacts (via HIN-200 domain 2) with AIM2 (via HIN-200 domain); preventing activation of the AIM2 inflammasome. Binds to several transcription factors, including NF-kappa-B p50 (NFKB1) and p65 (RELA), FOS, JUN, E2F1, E2F4, MYOD1 and myogenin. Also binds TP53/p53, the hypophosphorylated, growth-inhibitory form of the retinoblastoma protein and the p53-binding protein 1 (TP53BP1). Phosphorylated.

Its subcellular location is the cytoplasm. It localises to the nucleus. DNA-binding protein involved in innate immune response and has anti-inflammatory activity. Inhibits caspase activation in response to cytosolic DNA by preventing activation of the AIM2 inflammasome, probably by sequestering cytoplasmic DNA and preventing its being bound by AIM2. Also inhibits activation of the AIM2 inflammasome via a direct interaction with AIM2, which prevents the interaction between AIM2 and PYCARD and formation of the AIM2 inflammasome. Binds double-stranded DNA (dsDNA) in the cytosol. Has anti-apoptotic effects due to inhibition of the transcriptional activity of TP53/p53. Inhibits the transcriptional activity of several transcription factors, including NF-kappa-B p50 and p65, FOS, JUN, E2F1, E2F4, MYOD1 and myogenin. This chain is Interferon-activable protein 202, found in Mus musculus (Mouse).